Here is a 212-residue protein sequence, read N- to C-terminus: Ribosomal RNA small subunit methyltransferase G (212 aa).

Residues G80, L85, 131–132 (VE), and R146 each bind S-adenosyl-L-methionine.

This sequence belongs to the methyltransferase superfamily. RNA methyltransferase RsmG family.

Its subcellular location is the cytoplasm. It catalyses the reaction guanosine(527) in 16S rRNA + S-adenosyl-L-methionine = N(7)-methylguanosine(527) in 16S rRNA + S-adenosyl-L-homocysteine. Specifically methylates the N7 position of guanine in position 527 of 16S rRNA. In Azoarcus sp. (strain BH72), this protein is Ribosomal RNA small subunit methyltransferase G.